A 493-amino-acid polypeptide reads, in one-letter code: Probable UTP--glucose-1-phosphate uridylyltransferase (493 aa).

UTP-binding positions include 105–108, Gln181, Gly211, and Asp242; that span reads LTGK. Residue 107–108 coordinates substrate; that stretch reads GK. A substrate-binding site is contributed by 240-242; that stretch reads NVD.

It belongs to the UDPGP type 1 family.

It carries out the reaction alpha-D-glucose 1-phosphate + UTP + H(+) = UDP-alpha-D-glucose + diphosphate. In terms of biological role, plays a central role as a glucosyl donor in cellular metabolic pathways. The protein is Probable UTP--glucose-1-phosphate uridylyltransferase of Saccharomyces cerevisiae (strain ATCC 204508 / S288c) (Baker's yeast).